A 151-amino-acid polypeptide reads, in one-letter code: 16.9 kDa class I heat shock protein 1 (151 aa).

Positions 37–151 (ETAAFANARV…PEVKAIEISG (115 aa)) constitute a sHSP domain.

It belongs to the small heat shock protein (HSP20) family. As to quaternary structure, may form oligomeric structures.

It localises to the cytoplasm. This is 16.9 kDa class I heat shock protein 1 (hsp16.9A) from Triticum aestivum (Wheat).